The following is a 297-amino-acid chain: Probable ABC transporter phosphite binding protein PhnD1 (297 aa).

The signal sequence occupies residues 1 to 24 (MFNLKYFLVSSSLLFSVFSSPVFS).

This sequence belongs to the phosphate/phosphite/phosphonate binding protein family. In terms of assembly, the complex may be composed of two ATP-binding proteins (PhnC1), two transmembrane proteins (PhnE1) and a solute-binding protein (PhnD1).

It is found in the periplasm. In terms of biological role, probably part of the ABC transporter complex PhnD1C1E1. Binds strongly to inorganic phosphite and with very weak affinities to methylphosphonate (MPn) and phosphate. The chain is Probable ABC transporter phosphite binding protein PhnD1 from Prochlorococcus marinus (strain MIT 9301).